We begin with the raw amino-acid sequence, 509 residues long: T-complex protein 11-like protein 1 (509 aa).

A compositionally biased stretch (basic and acidic residues) spans 1-12 (MSENLDKSHVDE). The tract at residues 1-57 (MSENLDKSHVDEAGEAEAAASEQGLEGALECSDETLQKKVKSDSPSSQRVGRPHSSP) is disordered. Residues 16–30 (AEAAASEQGLEGALE) are compositionally biased toward low complexity. Serine 56 is subject to Phosphoserine.

The protein belongs to the TCP11 family.

This chain is T-complex protein 11-like protein 1 (Tcp11l1), found in Mus musculus (Mouse).